We begin with the raw amino-acid sequence, 161 residues long: Large ribosomal subunit protein uL15 (161 aa).

The segment at 1 to 43 (MKLSEISDNPGARKKRMRIGRGIGSGKGKTGGRGGKGQTARSG) is disordered. Over residues 21–37 (RGIGSGKGKTGGRGGKG) the composition is skewed to gly residues.

Belongs to the universal ribosomal protein uL15 family. In terms of assembly, part of the 50S ribosomal subunit.

Functionally, binds to the 23S rRNA. The polypeptide is Large ribosomal subunit protein uL15 (Rhodopseudomonas palustris (strain BisB5)).